Reading from the N-terminus, the 527-residue chain is Peptide chain release factor 3 (527 aa).

Residues 9–277 enclose the tr-type G domain; it reads AKRRTFAIIS…AVVDWAPRPL (269 aa). GTP is bound by residues 18-25, 86-90, and 140-143; these read SHPDAGKT, DTPGH, and NKLD.

Belongs to the TRAFAC class translation factor GTPase superfamily. Classic translation factor GTPase family. PrfC subfamily.

Its subcellular location is the cytoplasm. Its function is as follows. Increases the formation of ribosomal termination complexes and stimulates activities of RF-1 and RF-2. It binds guanine nucleotides and has strong preference for UGA stop codons. It may interact directly with the ribosome. The stimulation of RF-1 and RF-2 is significantly reduced by GTP and GDP, but not by GMP. The sequence is that of Peptide chain release factor 3 from Pseudomonas fluorescens (strain SBW25).